The following is a 298-amino-acid chain: ADP/ATP translocase 1 (298 aa).

Topologically, residues 1–7 (MSDQALS) are mitochondrial intermembrane. S2 is modified (N-acetylserine). The Solcar 1 repeat unit spans residues 6-98 (LSFLKDFLAG…FAFKDKYKQI (93 aa)). S7 carries the phosphoserine modification. Residues 8–37 (FLKDFLAGGVAAAVSKTAVAPIERVKLLLQ) traverse the membrane as a helical segment. Residues 38–74 (VQHASKQISAEKQYKGIIDCVVRIPKEQGFLSFWRGN) are Mitochondrial matrix-facing. K52 carries the post-translational modification N6,N6,N6-trimethyllysine. The helical transmembrane segment at 75–99 (LANVIRYFPTQALNFAFKDKYKQIF) threads the bilayer. Residues R80 and K92 each contribute to the ADP site. Over 100 to 109 (LGGVDRHKQF) the chain is Mitochondrial intermembrane. The chain crosses the membrane as a helical span at residues 110–130 (WRYFAGNLASGGAAGATSLCF). 2 Solcar repeats span residues 111–201 (RYFA…AKGM) and 212–297 (VSWM…IKKY). Residues 131 to 178 (VYPLDFARTRLAADVGKGAAQREFSGLGNCLTKIFKSDGLRGLYQGFN) are Mitochondrial matrix-facing. K147 carries the post-translational modification N6-succinyllysine. C160 is modified (S-nitrosocysteine). Residues 179-199 (VSVQGIIIYRAAYFGVYDTAK) form a helical membrane-spanning segment. Residues 200-210 (GMLPDPKNVHI) are Mitochondrial intermembrane-facing. The chain crosses the membrane as a helical span at residues 211–231 (IVSWMIAQTVTAVAGLVSYPF). The Mitochondrial matrix segment spans residues 232–273 (DTVRRRMMMQSGRKGADIMYTGTVDCWKKIAKDEGAKAFFKG). R235 provides a ligand contact to ADP. The tract at residues 235–240 (RRRMMM) is important for transport activity. The Nucleotide carrier signature motif signature appears at 235-240 (RRRMMM). Residues K245 and K272 each carry the N6-succinyllysine modification. A helical transmembrane segment spans residues 274–291 (AWSNVLRGMGGAFVLVLY). The Mitochondrial intermembrane portion of the chain corresponds to 292–298 (DEIKKYV).

It belongs to the mitochondrial carrier (TC 2.A.29) family. In terms of assembly, monomer. Found in a complex with ARL2, ARL2BP and SLC25A4/ANT1. Interacts with ARL2BP. Interacts with TIMM44; leading to inhibit the presequence translocase TIMM23, thereby promoting stabilization of PINK1. In terms of processing, under cell death induction, transglutaminated by TGM2. Transglutamination leads to formation of covalent cross-links between a glutamine and the epsilon-amino group of a lysine residue, forming polymers.

The protein localises to the mitochondrion inner membrane. It is found in the membrane. It carries out the reaction ADP(in) + ATP(out) = ADP(out) + ATP(in). It catalyses the reaction H(+)(in) = H(+)(out). With respect to regulation, the matrix-open state (m-state) is inhibited by the membrane-permeable bongkrekic acid (BKA). The cytoplasmic-open state (c-state) is inhibited by the membrane-impermeable toxic inhibitor carboxyatractyloside (CATR). Proton transporter activity is inhibited by ADP:ATP antiporter activity. Functionally, ADP:ATP antiporter that mediates import of ADP into the mitochondrial matrix for ATP synthesis, and export of ATP out to fuel the cell. Cycles between the cytoplasmic-open state (c-state) and the matrix-open state (m-state): operates by the alternating access mechanism with a single substrate-binding site intermittently exposed to either the cytosolic (c-state) or matrix (m-state) side of the inner mitochondrial membrane. In addition to its ADP:ATP antiporter activity, also involved in mitochondrial uncoupling and mitochondrial permeability transition pore (mPTP) activity. Plays a role in mitochondrial uncoupling by acting as a proton transporter: proton transport uncouples the proton flows via the electron transport chain and ATP synthase to reduce the efficiency of ATP production and cause mitochondrial thermogenesis. Proton transporter activity is inhibited by ADP:ATP antiporter activity, suggesting that SLC25A4/ANT1 acts as a master regulator of mitochondrial energy output by maintaining a delicate balance between ATP production (ADP:ATP antiporter activity) and thermogenesis (proton transporter activity). Proton transporter activity requires free fatty acids as cofactor, but does not transport it. Probably mediates mitochondrial uncoupling in tissues that do not express UCP1. Also plays a key role in mPTP opening, a non-specific pore that enables free passage of the mitochondrial membranes to solutes of up to 1.5 kDa, and which contributes to cell death. It is however unclear if SLC25A4/ANT1 constitutes a pore-forming component of mPTP or regulates it. Acts as a regulator of mitophagy independently of ADP:ATP antiporter activity: promotes mitophagy via interaction with TIMM44, leading to inhibit the presequence translocase TIMM23, thereby promoting stabilization of PINK1. The sequence is that of ADP/ATP translocase 1 from Oryctolagus cuniculus (Rabbit).